A 188-amino-acid polypeptide reads, in one-letter code: Acireductone dioxygenase (188 aa).

Histidine 97, histidine 99, glutamate 103, and histidine 141 together coordinate Fe(2+). Histidine 97, histidine 99, glutamate 103, and histidine 141 together coordinate Ni(2+).

Belongs to the acireductone dioxygenase (ARD) family. As to quaternary structure, monomer. Requires Fe(2+) as cofactor. Ni(2+) serves as cofactor.

It carries out the reaction 1,2-dihydroxy-5-(methylsulfanyl)pent-1-en-3-one + O2 = 3-(methylsulfanyl)propanoate + CO + formate + 2 H(+). It catalyses the reaction 1,2-dihydroxy-5-(methylsulfanyl)pent-1-en-3-one + O2 = 4-methylsulfanyl-2-oxobutanoate + formate + 2 H(+). It participates in amino-acid biosynthesis; L-methionine biosynthesis via salvage pathway; L-methionine from S-methyl-5-thio-alpha-D-ribose 1-phosphate: step 5/6. Catalyzes 2 different reactions between oxygen and the acireductone 1,2-dihydroxy-3-keto-5-methylthiopentene (DHK-MTPene) depending upon the metal bound in the active site. Fe-containing acireductone dioxygenase (Fe-ARD) produces formate and 2-keto-4-methylthiobutyrate (KMTB), the alpha-ketoacid precursor of methionine in the methionine recycle pathway. Ni-containing acireductone dioxygenase (Ni-ARD) produces methylthiopropionate, carbon monoxide and formate, and does not lie on the methionine recycle pathway. This is Acireductone dioxygenase from Xanthomonas axonopodis pv. citri (strain 306).